We begin with the raw amino-acid sequence, 651 residues long: Acetyl-coenzyme A synthetase (651 aa).

CoA is bound by residues 189–192 (RGGK), threonine 311, and asparagine 335. Residues 387 to 389 (GEP), 411 to 416 (DTWWQT), aspartate 500, and arginine 515 each bind ATP. Serine 523 provides a ligand contact to CoA. ATP is bound at residue arginine 526. Positions 537, 539, and 542 each coordinate Mg(2+). CoA is bound at residue arginine 584. The residue at position 609 (lysine 609) is an N6-acetyllysine.

This sequence belongs to the ATP-dependent AMP-binding enzyme family. Requires Mg(2+) as cofactor. Acetylated. Deacetylation by the SIR2-homolog deacetylase activates the enzyme.

The catalysed reaction is acetate + ATP + CoA = acetyl-CoA + AMP + diphosphate. Catalyzes the conversion of acetate into acetyl-CoA (AcCoA), an essential intermediate at the junction of anabolic and catabolic pathways. AcsA undergoes a two-step reaction. In the first half reaction, AcsA combines acetate with ATP to form acetyl-adenylate (AcAMP) intermediate. In the second half reaction, it can then transfer the acetyl group from AcAMP to the sulfhydryl group of CoA, forming the product AcCoA. The chain is Acetyl-coenzyme A synthetase from Rhizobium etli (strain ATCC 51251 / DSM 11541 / JCM 21823 / NBRC 15573 / CFN 42).